Consider the following 302-residue polypeptide: Sulfate adenylyltransferase subunit 2 (302 aa).

The disordered stretch occupies residues 280-302 (RQGRLIDSDQSASMEQKKRQGYF).

It belongs to the PAPS reductase family. CysD subfamily. As to quaternary structure, heterodimer composed of CysD, the smaller subunit, and CysN.

The enzyme catalyses sulfate + ATP + H(+) = adenosine 5'-phosphosulfate + diphosphate. It participates in sulfur metabolism; hydrogen sulfide biosynthesis; sulfite from sulfate: step 1/3. Its function is as follows. With CysN forms the ATP sulfurylase (ATPS) that catalyzes the adenylation of sulfate producing adenosine 5'-phosphosulfate (APS) and diphosphate, the first enzymatic step in sulfur assimilation pathway. APS synthesis involves the formation of a high-energy phosphoric-sulfuric acid anhydride bond driven by GTP hydrolysis by CysN coupled to ATP hydrolysis by CysD. This is Sulfate adenylyltransferase subunit 2 from Shewanella frigidimarina (strain NCIMB 400).